A 283-amino-acid chain; its full sequence is Quinate/shikimate dehydrogenase (NAD(+)) (283 aa).

Positions 17, 69, 73, 94, and 110 each coordinate shikimate. Residues 17–19 (SRT), Thr-69, Lys-73, Asn-94, and Asp-110 each bind L-quinate. Residue Lys-73 is the Proton acceptor of the active site. Residues 137–138 (GV), Asp-158, Arg-163, 203–206 (PMGM), Ala-213, Val-228, and Gly-251 contribute to the NAD(+) site. Gln-258 lines the shikimate pocket. L-quinate is bound at residue Gln-258.

Belongs to the shikimate dehydrogenase family. Homodimer.

It carries out the reaction L-quinate + NAD(+) = 3-dehydroquinate + NADH + H(+). The catalysed reaction is shikimate + NAD(+) = 3-dehydroshikimate + NADH + H(+). It functions in the pathway metabolic intermediate biosynthesis; chorismate biosynthesis; chorismate from D-erythrose 4-phosphate and phosphoenolpyruvate: step 4/7. The protein operates within aromatic compound metabolism; 3,4-dihydroxybenzoate biosynthesis; 3-dehydroquinate from D-quinate (NAD(+) route). In terms of biological role, involved in the biosynthesis of the chorismate, which leads to the biosynthesis of aromatic amino acids, and plays a key role in the quinate degradation pathway. Catalyzes the NAD(+)-dependent oxidation of both quinate and shikimate to 3-dehydroquinate and 3-dehydroshikimate, respectively. It can only use NAD. The protein is Quinate/shikimate dehydrogenase (NAD(+)) of Corynebacterium glutamicum (strain ATCC 13032 / DSM 20300 / JCM 1318 / BCRC 11384 / CCUG 27702 / LMG 3730 / NBRC 12168 / NCIMB 10025 / NRRL B-2784 / 534).